A 521-amino-acid polypeptide reads, in one-letter code: Bifunctional dihydrofolate reductase-thymidylate synthase (521 aa).

In terms of domain architecture, DHFR spans 17–194 (NYQVVVAGTR…IRHSFVSFVR (178 aa)). Position 21 (Val21) interacts with substrate. NADP(+)-binding positions include Ala23 and 29 to 35 (GIGKDGV). Asp43 is a binding site for substrate. Residues 67–69 (RKT) and 88–91 (LTRS) each bind NADP(+). Substrate is bound at residue Ile130. 131–138 (GGGQVLRE) is a binding site for NADP(+). Position 151 (Thr151) interacts with substrate. The segment at 197–521 (KSVAETHESN…HQKIEMKMAV (325 aa)) is thymidylate synthase. A dUMP-binding site is contributed by Arg258. Cys403 is an active-site residue. DUMP-binding positions include His404, 422–426 (QRSAD), Asn434, and 464–466 (HVY).

It in the N-terminal section; belongs to the dihydrofolate reductase family. The protein in the C-terminal section; belongs to the thymidylate synthase family.

It carries out the reaction (6S)-5,6,7,8-tetrahydrofolate + NADP(+) = 7,8-dihydrofolate + NADPH + H(+). The catalysed reaction is dUMP + (6R)-5,10-methylene-5,6,7,8-tetrahydrofolate = 7,8-dihydrofolate + dTMP. Its pathway is cofactor biosynthesis; tetrahydrofolate biosynthesis; 5,6,7,8-tetrahydrofolate from 7,8-dihydrofolate: step 1/1. In terms of biological role, bifunctional enzyme. Involved in de novo dTMP biosynthesis. Key enzyme in folate metabolism. Can play two different roles depending on the source of dihydrofolate: de novo synthesis of tetrahydrofolate or recycling of the dihydrofolate released as one of the end products of the TS catalyzed reaction. Catalyzes an essential reaction for de novo glycine and purine synthesis, DNA precursor synthesis, and for the conversion of dUMP to dTMP. In Zea mays (Maize), this protein is Bifunctional dihydrofolate reductase-thymidylate synthase (DRTS).